A 238-amino-acid polypeptide reads, in one-letter code: ATP-dependent dethiobiotin synthetase BioD (238 aa).

Residue 12–17 (GVGKTV) participates in ATP binding. Threonine 16 contacts Mg(2+). Lysine 37 is an active-site residue. Residue threonine 41 participates in substrate binding. ATP is bound by residues aspartate 50, 109–112 (EGAG), 170–171 (GS), and 200–202 (PAG). The Mg(2+) site is built by aspartate 50 and glutamate 109.

Belongs to the dethiobiotin synthetase family. As to quaternary structure, homodimer. It depends on Mg(2+) as a cofactor.

The protein resides in the cytoplasm. The enzyme catalyses (7R,8S)-7,8-diammoniononanoate + CO2 + ATP = (4R,5S)-dethiobiotin + ADP + phosphate + 3 H(+). Its pathway is cofactor biosynthesis; biotin biosynthesis; biotin from 7,8-diaminononanoate: step 1/2. Its function is as follows. Catalyzes a mechanistically unusual reaction, the ATP-dependent insertion of CO2 between the N7 and N8 nitrogen atoms of 7,8-diaminopelargonic acid (DAPA, also called 7,8-diammoniononanoate) to form a ureido ring. This is ATP-dependent dethiobiotin synthetase BioD from Frankia casuarinae (strain DSM 45818 / CECT 9043 / HFP020203 / CcI3).